Reading from the N-terminus, the 395-residue chain is Proteinase-activated receptor 4 (395 aa).

A signal peptide spans 1-16 (MCWPLLYPLMLGFSIS). Positions 17 to 58 (PAECQTPSIYDDVESTREGQEASLRPTVELNESKSPDKPNPR) are cleaved as a propeptide — removed for receptor activation. Residues 46 to 66 (LNESKSPDKPNPRGFPGKPCA) are disordered. A compositionally biased stretch (basic and acidic residues) spans 47–56 (NESKSPDKPN). The Extracellular portion of the chain corresponds to 59-93 (GFPGKPCANNSDTLELPASSEALLLGWVPTRLVPA). Residue N67 is glycosylated (N-linked (GlcNAc...) asparagine). A helical membrane pass occupies residues 94-114 (IYGLVVVVGLPANGLALWVLA). Residues 115-119 (TRVPR) are Cytoplasmic-facing. The chain crosses the membrane as a helical span at residues 120–140 (LPSTILLMNLAVADLLLALVL). Residues 141-161 (PPRLVYHLRGQRWPFGEAACR) are Extracellular-facing. C160 and C239 are disulfide-bonded. The helical transmembrane segment at 162–182 (VATAALYGHMYGSVLLLAAVS) threads the bilayer. Residues 183–203 (LDRYLALVHSLRARALRGQRL) lie on the Cytoplasmic side of the membrane. A helical membrane pass occupies residues 204–224 (TTILCLVAWLSAATLVLPLTF). Residues 225–254 (HRQTFLLAGSDRMLCHDALPLAEQTSHWRP) are Extracellular-facing. The chain crosses the membrane as a helical span at residues 255–275 (AFICLAVLGCFVPLLAMVLCY). Over 276 to 295 (GATLRALAANGQRYSHAVRL) the chain is Cytoplasmic. A helical membrane pass occupies residues 296–316 (TALVLFSAVAAFTPSNVLLVL). The Extracellular segment spans residues 317-330 (HYSNPSPEAWGNLY). The helical transmembrane segment at 331–354 (GAYVPSLALSTLNSCVDPFIYYYV) threads the bilayer. Topologically, residues 355-395 (SHEFREKVRAMLCRQLKASSSSQASREAGSRGTAICSSTLL) are cytoplasmic.

The protein belongs to the G-protein coupled receptor 1 family. A proteolytic cleavage generates a new N-terminus that functions as a tethered ligand.

The protein resides in the cell membrane. In terms of biological role, receptor for activated thrombin or trypsin coupled to G proteins that stimulate phosphoinositide hydrolysis. May play a role in platelets activation. This is Proteinase-activated receptor 4 (F2rl3) from Rattus norvegicus (Rat).